The chain runs to 144 residues: Transcription antitermination protein NusB (144 aa).

It belongs to the NusB family.

Involved in transcription antitermination. Required for transcription of ribosomal RNA (rRNA) genes. Binds specifically to the boxA antiterminator sequence of the ribosomal RNA (rrn) operons. This Streptococcus thermophilus (strain CNRZ 1066) protein is Transcription antitermination protein NusB.